A 2157-amino-acid polypeptide reads, in one-letter code: MSVKEAGSSGRREQAAYHLHIYPQLSTTESQASCRVTATKDSTTSDVIKDAIASLRLDGTKCYVLVEVKESGGEEWVLDANDSPVHRVLLWPRRAQDEHPQEDGYYFLLQERNADGTIKYVHMQLVAQATATRRLVERGLLPRQQADFDDLCNLPELTEGNLLKNLKHRFLQQKIYTYAGSILVAINPFKFLPIYNPKYVKMYENQQLGKLEPHVFALADVAYYTMLRKRVNQCIVISGESGSGKTQSTNFLIHCLTALSQKGYASGVERTILGAGPVLEAFGNAKTAHNNNSSRFGKFIQVSYLESGIVRGAVVEKYLLEKSRLVSQEKDERNYHVFYYLLLGVSEEERQEFQLKQPEDYFYLNQHNLKIEDGEDLKHDFERLKQAMEMVGFLPATKKQIFAVLSAILYLGNVTYKKRATGREEGLEVGPPEVLDTLSQLLKVKREILVEVLTKRKTVTVNDKLILPYSLSEAITARDSMAKSLYSALFDWIVLRINHALLNKKDVEEAVSCLSIGVLDIFGFEDFERNSFEQFCINYANEQLQYYFNQHIFKLEQEEYQGEGITWHNIGYTDNVGCIHLISKKPTGLFYLLDEESNFPHATSQTLLAKFKQQHEDNKYFLGTPVMEPAFIIQHFAGKVKYQIKDFREKNMDYMRPDIVALLRGSDSSYVRELIGMDPVAVFRWAVLRAAIRAMAVLREAGRLRAERAEKAAGMSSPGAQSHPEELPRGASTPSEKLYRDLHNQMIKSIKGLPWQGEDPRSLLQSLSRLQKPRAFILKSKGIKQKQIIPKNLLDSKSLKLIISMTLHDRTTKSLLHLHKKKKPPSISAQFQTSLNKLLEALGKAEPFFIRCIRSNAEKKELCFDDELVLQQLRYTGMLETVRIRRSGYSAKYTFQDFTEQFQVLLPKDAQPCREVISTLLEKMKIDKRNYQIGKTKVFLKETERQALQETLHREVVRKILLLQSWFRMVLERRHFLQMKRAAVTIQACWRSYRVRRALERTQAAVYLQASWRGYWQRKLYRHQKQSIIRLQSLCRGHLQRKSFSQMISEKQKAEEKEREALEAARAGAEEGGQGQAAGGQQVAEQGPEPAEDGGHLASEPEVQPSDRSPLEHSSPEKEAPSPEKTLPPQKTVAAESHEKVPSSREKRESRRQRGLEHVKFQNKHIQSCKEESALREPSRRVTQEQGVSLLEDKKESREDETLLVVETEAENTSQKQPTEQPQAMAVGKVSEETEKTLPSGSPRPGQLERPTSLALDSRVSPPAPGSAPETPEDKSKPCGSPRVQEKPDSPGGSTQIQRYLDAERLASAVELWRGKKLVAAASPSAMLSQSLDLSDRHRATGAALTPTEERRTSFSTSDVSKLLPSLAKAQPAAETTDGERSAKKPAVQKKKPGDASSLPDAGLSPGSQVDSKSTFKRLFLHKTKDKKYSLEGAEELENAVSGHVVLEATTMKKGLEAPSGQQHRHAAGEKRTKEPGGKGKKNRNVKIGKITVSEKWRESVFRQITNANELKYLDEFLLNKINDLRSQKTPIESLFIEATEKFRSNIKTMYSVPNGKIHVGYKDLMENYQIVVSNLATERGQKDTNLVLNLFQSLLDEFTRGYTKNDFEPVKQSKAQKKKRKQERAVQEHNGHVFASYQVSIPQSCEQCLSYIWLMDKALLCSVCKMTCHKKCVHKIQSHCSYTYGRKGEPGVEPGHFGVCVDSLTSDKASVPIVLEKLLEHVEMHGLYTEGLYRKSGAANRTRELRQALQTDPAAVKLENFPIHAITGVLKQWLRELPEPLMTFAQYGDFLRAVELPEKQEQLAAIYAVLEHLPEANHNSLERLIFHLVKVALLEDVNRMSPGALAIIFAPCLLRCPDNSDPLTSMKDVLKITTCVEMLIKEQMRKYKVKMEEISQLEAAESIAFRRLSLLRQNAPWPLKLGFSSPYEGVLNKSPKTRDIQEEELEVLLEEEAAGGDEDREKEILIERIQSIKEEKEDITYRLPELDPRGSDEENLDSETSASTESLLEERAGRGASEGPPAPALPCPGAPTPSPLPTVAAPPRRRPSSFVTVRVKTPRRTPIMPTANIKLPPGLPSHLPRWAPGAREAAAPVRRREPPARRPDQIHSVYITPGADLPVQGALEPLEEDGQPPGAKRRYSDPPTYCLPPASGQTNG.

Ser2 is modified (N-acetylserine). One can recognise a Ras-associating domain in the interval 15–114 (AAYHLHIYPQ…YYFLLQERNA (100 aa)). In terms of domain architecture, Myosin motor spans 146-953 (ADFDDLCNLP…ERQALQETLH (808 aa)). 239 to 246 (GESGSGKT) serves as a coordination point for ATP. A disordered region spans residues 709–734 (AEKAAGMSSPGAQSHPEELPRGASTP). Phosphoserine is present on residues Ser716 and Ser717. The tract at residues 844–855 (KAEPFFIRCIRS) is actin-binding. Residues 940-1044 (LKETERQALQ…CRGHLQRKSF (105 aa)) form a neck or regulatory domain region. IQ domains follow at residues 957–977 (VRKI…RHFL), 979–1000 (MKRA…RALE), 1001–1023 (RTQA…LYRH), and 1024–1053 (QKQS…EKQK). Residue Ser1045 is modified to Phosphoserine. Residues 1045 to 2157 (SQMISEKQKA…LPPASGQTNG (1113 aa)) are tail. Positions 1046 to 1071 (QMISEKQKAEEKEREALEAARAGAEE) form a coiled coil. 3 disordered regions span residues 1046-1298 (QMIS…TQIQ), 1320-1410 (AAAS…GSQV), and 1455-1484 (GLEA…KKNR). 5 stretches are compositionally biased toward basic and acidic residues: residues 1050-1063 (EKQK…EALE), 1109-1122 (SPLE…EAPS), 1136-1160 (ESHE…EHVK), 1168-1183 (SCKE…RRVT), and 1191-1201 (LEDKKESREDE). Ser1114, Ser1115, and Ser1122 each carry phosphoserine. The span at 1211–1222 (ENTSQKQPTEQP) shows a compositional bias: polar residues. Phosphoserine occurs at positions 1242, 1253, 1261, and 1267. Position 1271 is a phosphothreonine (Thr1271). 3 positions are modified to phosphoserine: Ser1290, Ser1323, and Ser1331. Thr1346 bears the Phosphothreonine mark. 3 positions are modified to phosphoserine: Ser1354, Ser1356, and Ser1405. Residues 1467–1478 (AAGEKRTKEPGG) show a composition bias toward basic and acidic residues. The Phorbol-ester/DAG-type zinc finger occupies 1632–1681 (GHVFASYQVSIPQSCEQCLSYIWLMDKALLCSVCKMTCHKKCVHKIQSHC). The Rho-GAP domain occupies 1703-1888 (DSLTSDKASV…MLIKEQMRKY (186 aa)). Positions 1739–1744 (AANRTR) are interaction with RHOA. Positions 1880–1901 (LIKEQMRKYKVKMEEISQLEAA) form a coiled coil. Phosphoserine is present on residues Ser1926, Ser1972, Ser1992, and Ser1999. A coiled-coil region spans residues 1959–1989 (EDREKEILIERIQSIKEEKEDITYRLPELDP). A compositionally biased stretch (basic and acidic residues) spans 1980 to 1993 (ITYRLPELDPRGSD). Positions 1980-2157 (ITYRLPELDP…LPPASGQTNG (178 aa)) are disordered. Thr2005 bears the Phosphothreonine mark. The span at 2021-2037 (PPAPALPCPGAPTPSPL) shows a compositional bias: pro residues. Phosphoserine is present on Ser2050. A compositionally biased stretch (low complexity) spans 2081-2093 (PRWAPGAREAAAP). A compositionally biased stretch (basic and acidic residues) spans 2095–2106 (RRREPPARRPDQ). Ser2141 is modified (phosphoserine).

It belongs to the TRAFAC class myosin-kinesin ATPase superfamily. Myosin family. As to quaternary structure, interacts (via IQ domains) with CALM. Interacts with RHOA. Interacts (via Rho-GAP domain) with ROBO1; this inhibits the interaction with RHOA and the stimulation of RHOA GTPase activity, and thereby increases the levels of active RHOA. In terms of tissue distribution, detected in peripheral blood leukocytes (at protein level). Expressed predominantly in peripheral blood leukocytes and at lower levels, in thymus, spleen, testis, prostate, ovary, brain, small intestine and lung.

The protein localises to the cytoplasm. It localises to the cell cortex. It is found in the perinuclear region. The protein resides in the cytoskeleton. In terms of biological role, myosins are actin-based motor molecules with ATPase activity. Unconventional myosins serve in intracellular movements. Binds actin with high affinity both in the absence and presence of ATP and its mechanochemical activity is inhibited by calcium ions. Also acts as a GTPase activator for RHOA. Plays a role in the regulation of cell migration via its role as RHOA GTPase activator. This is regulated by its interaction with the SLIT2 receptor ROBO1; interaction with ROBO1 impairs interaction with RHOA and subsequent activation of RHOA GTPase activity, and thereby leads to increased levels of active, GTP-bound RHOA. The polypeptide is Unconventional myosin-IXb (MYO9B) (Homo sapiens (Human)).